A 166-amino-acid polypeptide reads, in one-letter code: Endoribonuclease YbeY (166 aa).

H129, H133, and H139 together coordinate Zn(2+).

The protein belongs to the endoribonuclease YbeY family. The cofactor is Zn(2+).

Its subcellular location is the cytoplasm. In terms of biological role, single strand-specific metallo-endoribonuclease involved in late-stage 70S ribosome quality control and in maturation of the 3' terminus of the 16S rRNA. The chain is Endoribonuclease YbeY from Mesorhizobium japonicum (strain LMG 29417 / CECT 9101 / MAFF 303099) (Mesorhizobium loti (strain MAFF 303099)).